Here is an 81-residue protein sequence, read N- to C-terminus: Cytochrome c oxidase subunit NDUFA4 (81 aa).

At 1–14 (MLRHILGLAKKHPS) the chain is on the mitochondrial matrix side. Lysine 10 is modified (N6-acetyllysine). A helical transmembrane segment spans residues 15-37 (LIPLFVFLGTGATGATLYLLRLA). The Mitochondrial intermembrane portion of the chain corresponds to 38 to 81 (LFSPDVCWDRNNPEPWNKLGPNDQYKFYSVNVDYDKLKKERPDF). Position 66 is a phosphoserine (serine 66).

It belongs to the complex IV NDUFA4 subunit family. In terms of assembly, component of the cytochrome c oxidase (complex IV, CIV), a multisubunit enzyme composed of 14 subunits. The complex is composed of a catalytic core of 3 subunits MT-CO1, MT-CO2 and MT-CO3, encoded in the mitochondrial DNA, and 11 supernumerary subunits COX4I, COX5A, COX5B, COX6A, COX6B, COX6C, COX7A, COX7B, COX7C, COX8 and NDUFA4, which are encoded in the nuclear genome. The complex exists as a monomer or a dimer and forms supercomplexes (SCs) in the inner mitochondrial membrane with NADH-ubiquinone oxidoreductase (complex I, CI) and ubiquinol-cytochrome c oxidoreductase (cytochrome b-c1 complex, complex III, CIII), resulting in different assemblies (supercomplex SCI(1)III(2)IV(1) and megacomplex MCI(2)III(2)IV(2)). Interacts with RAB5IF. Interacts with FLVCR2; this interaction occurs in the absence of heme and is disrupted upon heme binding.

It localises to the mitochondrion inner membrane. Functionally, component of the cytochrome c oxidase, the last enzyme in the mitochondrial electron transport chain which drives oxidative phosphorylation. The respiratory chain contains 3 multisubunit complexes succinate dehydrogenase (complex II, CII), ubiquinol-cytochrome c oxidoreductase (cytochrome b-c1 complex, complex III, CIII) and cytochrome c oxidase (complex IV, CIV), that cooperate to transfer electrons derived from NADH and succinate to molecular oxygen, creating an electrochemical gradient over the inner membrane that drives transmembrane transport and the ATP synthase. Cytochrome c oxidase is the component of the respiratory chain that catalyzes the reduction of oxygen to water. Electrons originating from reduced cytochrome c in the intermembrane space (IMS) are transferred via the dinuclear copper A center (CU(A)) of subunit 2 and heme A of subunit 1 to the active site in subunit 1, a binuclear center (BNC) formed by heme A3 and copper B (CU(B)). The BNC reduces molecular oxygen to 2 water molecules unsing 4 electrons from cytochrome c in the IMS and 4 protons from the mitochondrial matrix. NDUFA4 is required for complex IV maintenance. The sequence is that of Cytochrome c oxidase subunit NDUFA4 (NDUFA4) from Macaca fascicularis (Crab-eating macaque).